The chain runs to 616 residues: UDP-sugar pyrophosphorylase (616 aa).

The protein belongs to the USP family. The cofactor is Mg(2+). Requires Mn(2+) as cofactor.

The enzyme catalyses a monosaccharide 1-phosphate + UTP + H(+) = a UDP-monosaccharide + diphosphate. Functionally, may function as the terminal enzyme of the myo-inositol oxidation (MIO) pathway. May also play a role in the salvage pathway for synthesis of nucleotide sugars. The polypeptide is UDP-sugar pyrophosphorylase (USP) (Oryza sativa subsp. japonica (Rice)).